The primary structure comprises 139 residues: 3-hydroxyacyl-[acyl-carrier-protein] dehydratase FabZ (139 aa).

Histidine 47 is a catalytic residue.

This sequence belongs to the thioester dehydratase family. FabZ subfamily.

The protein resides in the cytoplasm. It carries out the reaction a (3R)-hydroxyacyl-[ACP] = a (2E)-enoyl-[ACP] + H2O. In terms of biological role, involved in unsaturated fatty acids biosynthesis. Catalyzes the dehydration of short chain beta-hydroxyacyl-ACPs and long chain saturated and unsaturated beta-hydroxyacyl-ACPs. This chain is 3-hydroxyacyl-[acyl-carrier-protein] dehydratase FabZ, found in Clostridium perfringens (strain ATCC 13124 / DSM 756 / JCM 1290 / NCIMB 6125 / NCTC 8237 / Type A).